We begin with the raw amino-acid sequence, 218 residues long: Mitochondrial fission factor (218 aa).

Over 1–198 the chain is Cytoplasmic; it reads MAEISRIQYE…ENKERAKREM (198 aa). Threonine 89 carries the post-translational modification Phosphothreonine. Phosphoserine is present on residues serine 129, serine 131, serine 146, and serine 171. Positions 167–198 form a coiled coil; the sequence is VDAASLRRQIIKLNRRLQLLEEENKERAKREM. A helical; Anchor for type IV membrane protein transmembrane segment spans residues 199 to 216; that stretch reads VMYSITVAFWLLNSWLWF. Residues 217-218 are Mitochondrial intermembrane-facing; sequence RR.

Belongs to the Tango11 family. As to quaternary structure, homodimer. Interacts with DNM1L. Interacts with C11orf65/MFI; the interaction inhibits MFF interaction with DNM1L.

The protein resides in the mitochondrion outer membrane. It localises to the peroxisome. It is found in the cytoplasmic vesicle. The protein localises to the secretory vesicle. Its subcellular location is the synaptic vesicle. Plays a role in mitochondrial and peroxisomal fission. Promotes the recruitment and association of the fission mediator dynamin-related protein 1 (DNM1L) to the mitochondrial surface. May be involved in regulation of synaptic vesicle membrane dynamics by recruitment of DNM1L to clathrin-containing vesicles. The protein is Mitochondrial fission factor (MFF) of Pongo abelii (Sumatran orangutan).